Consider the following 300-residue polypeptide: tRNA pseudouridine synthase A (300 aa).

D67 functions as the Nucleophile in the catalytic mechanism. Substrate is bound at residue Y125.

This sequence belongs to the tRNA pseudouridine synthase TruA family. Homodimer.

The enzyme catalyses uridine(38/39/40) in tRNA = pseudouridine(38/39/40) in tRNA. Its function is as follows. Formation of pseudouridine at positions 38, 39 and 40 in the anticodon stem and loop of transfer RNAs. In Synechococcus sp. (strain CC9902), this protein is tRNA pseudouridine synthase A.